A 1216-amino-acid chain; its full sequence is ATP-dependent DNA helicase Q4 (1216 aa).

2 disordered regions span residues 72 to 100 (EAQE…QSLL) and 113 to 171 (NLKN…PRLG). Polar residues-rich tracts occupy residues 86 to 100 (AATQ…QSLL) and 114 to 137 (LKNT…SLST). Phosphoserine is present on residues Ser-179 and Ser-181. The interval 235-340 (SEVSVQSPEA…LHASPRPASL (106 aa)) is disordered. Composition is skewed to polar residues over residues 248 to 262 (QPAQ…SINS) and 306 to 320 (TQVN…SNQA). The segment at 393–410 (DTCFRCGQFGHWASQCSQ) adopts a CCHC-type zinc-finger fold. The disordered stretch occupies residues 436–458 (AQRTGTASCHHSGEETQPAAPEL). The region spanning 506–684 (IMRILSGIST…AQHLGIAGEF (179 aa)) is the Helicase ATP-binding domain. 519-526 (LPTGAGKS) contacts ATP. The short motif at 627-630 (DEVH) is the DEAH box element. Residues 705–872 (DSDQALVTLL…AVKRLVQRVF (168 aa)) form the Helicase C-terminal domain. Cys-875, Cys-877, Cys-906, and His-909 together coordinate Zn(2+).

It belongs to the helicase family. RecQ subfamily. In terms of assembly, interacts with UBR1 and UBR2. Interacts with MCM10; this interaction regulates RECQL4 unwinding activity. Interacts with TOPBP1. The cofactor is Zn(2+).

Its subcellular location is the cytoplasm. It localises to the nucleus. The enzyme catalyses Couples ATP hydrolysis with the unwinding of duplex DNA by translocating in the 3'-5' direction.. It carries out the reaction ATP + H2O = ADP + phosphate + H(+). In terms of biological role, an ATP-dependent DNA helicase which unwinds dsDNA with a 3'-overhang in a 3'-5' direction. May play a role in development of the palate and the limbs. May modulate chromosome segregation. This is ATP-dependent DNA helicase Q4 (Recql4) from Mus musculus (Mouse).